Consider the following 472-residue polypeptide: Protein c-ets-2-A (472 aa).

Residues 85-170 (NTFNGFAKKR…EHLEEMMKEH (86 aa)) form the PNT domain. A DNA-binding region (ETS) is located at residues 366–446 (IQLWQFLLEL…SGKRYVYRFV (81 aa)).

It belongs to the ETS family.

The protein localises to the nucleus. Functionally, probable transcription factor. The polypeptide is Protein c-ets-2-A (ets2-a) (Xenopus laevis (African clawed frog)).